The sequence spans 293 residues: uncharacterized protein (293 aa).

One can recognise an HTH lysR-type domain in the interval 1–58 (MELKQLITFITAAEHVNFTLTAKMLNYAQSSVTSQIKSLEEEIGTPLFERLGKRLILT). The H-T-H motif DNA-binding region spans 18 to 37 (FTLTAKMLNYAQSSVTSQIK).

The protein belongs to the LysR transcriptional regulatory family.

The protein localises to the cytoplasm. This is an uncharacterized protein from Bacillus subtilis (strain 168).